Reading from the N-terminus, the 406-residue chain is MSVLEVLKERGYIAQMTHEEEIEKLLEKEKITFYIGFDPTADSLHVGHLIQIMTMAHMQRAGHRPIVLLGGGTALIGDPSGRTDMRKMLTKEEIDRNAEAFKKQMERFIDFSEGKAIMENNAKWLLGLNYIEFLRDIGVHFTVNRMLEAEAFKTRMERGLTFLEFNYMLMQAYDFLELYRRYGCVMQMGGNDQWSNIIAGVELIRKKEGKQAYGMTFVLLTTSEGKKMGKTEKGAIWLDPKKTSPYEFYQYWRNIGDADVEKALALLTFLPMDEVRRLGRLRDKEINEAKKVLAFEVTKLVHGEEEALKAQKAAEALFEGGGEMEHVPSIEVSQDIIGRKIVDVLFEAKVIPSKSEGRRLIQQGGLYINDKRVENVDECIKEEMVKENAILVRKGKKEYHRLLVKE.

Position 34 (Tyr34) interacts with L-tyrosine. A 'HIGH' region motif is present at residues 39–48 (PTADSLHVGH). Residues Tyr167 and Gln171 each contribute to the L-tyrosine site. The 'KMSKS' region motif lies at 227 to 231 (KMGKT). Residue Lys230 participates in ATP binding. Residues 339–404 (RKIVDVLFEA…GKKEYHRLLV (66 aa)) form the S4 RNA-binding domain.

This sequence belongs to the class-I aminoacyl-tRNA synthetase family. TyrS type 1 subfamily. As to quaternary structure, homodimer.

The protein resides in the cytoplasm. It carries out the reaction tRNA(Tyr) + L-tyrosine + ATP = L-tyrosyl-tRNA(Tyr) + AMP + diphosphate + H(+). Its function is as follows. Catalyzes the attachment of tyrosine to tRNA(Tyr) in a two-step reaction: tyrosine is first activated by ATP to form Tyr-AMP and then transferred to the acceptor end of tRNA(Tyr). This chain is Tyrosine--tRNA ligase, found in Caldanaerobacter subterraneus subsp. tengcongensis (strain DSM 15242 / JCM 11007 / NBRC 100824 / MB4) (Thermoanaerobacter tengcongensis).